The primary structure comprises 345 residues: Beta-ketoacyl-[acyl-carrier-protein] synthase III (345 aa).

Residues C114 and H272 contribute to the active site. The tract at residues Q273–R277 is ACP-binding. N302 is an active-site residue.

This sequence belongs to the thiolase-like superfamily. FabH family. Homodimer.

The protein resides in the cytoplasm. The enzyme catalyses malonyl-[ACP] + acetyl-CoA + H(+) = 3-oxobutanoyl-[ACP] + CO2 + CoA. It participates in lipid metabolism; fatty acid biosynthesis. Functionally, catalyzes the condensation reaction of fatty acid synthesis by the addition to an acyl acceptor of two carbons from malonyl-ACP. Catalyzes the first condensation reaction which initiates fatty acid synthesis and may therefore play a role in governing the total rate of fatty acid production. Possesses both acetoacetyl-ACP synthase and acetyl transacylase activities. Its substrate specificity determines the biosynthesis of branched-chain and/or straight-chain of fatty acids. This Rhodopirellula baltica (strain DSM 10527 / NCIMB 13988 / SH1) protein is Beta-ketoacyl-[acyl-carrier-protein] synthase III.